We begin with the raw amino-acid sequence, 506 residues long: Galactose/methyl galactoside import ATP-binding protein MglA (506 aa).

2 consecutive ABC transporter domains span residues 14–249 (LEMK…VGRS) and 264–506 (VMLE…SLYL). 46-53 (GENGAGKS) provides a ligand contact to ATP.

The protein belongs to the ABC transporter superfamily. Galactose/methyl galactoside importer (TC 3.A.1.2.3) family. The complex is composed of one ATP-binding protein (MglA), two transmembrane proteins (MglC) and a solute-binding protein (MglB).

It localises to the cell inner membrane. The enzyme catalyses D-galactose(out) + ATP + H2O = D-galactose(in) + ADP + phosphate + H(+). It catalyses the reaction methyl beta-D-galactoside(out) + ATP + H2O = methyl beta-D-galactoside(in) + ADP + phosphate + H(+). Its function is as follows. Part of the ABC transporter complex MglABC involved in galactose/methyl galactoside import. Responsible for energy coupling to the transport system. In Sodalis glossinidius (strain morsitans), this protein is Galactose/methyl galactoside import ATP-binding protein MglA.